A 282-amino-acid chain; its full sequence is Pantothenate synthetase (282 aa).

33–40 (MGALHAGH) serves as a coordination point for ATP. His-40 acts as the Proton donor in catalysis. A (R)-pantoate-binding site is contributed by Gln-64. Gln-64 is a binding site for beta-alanine. Residue 150 to 153 (GEKD) participates in ATP binding. Position 156 (Gln-156) interacts with (R)-pantoate. ATP is bound by residues Val-179 and 187–190 (LSSR).

The protein belongs to the pantothenate synthetase family. As to quaternary structure, homodimer.

It localises to the cytoplasm. It carries out the reaction (R)-pantoate + beta-alanine + ATP = (R)-pantothenate + AMP + diphosphate + H(+). Its pathway is cofactor biosynthesis; (R)-pantothenate biosynthesis; (R)-pantothenate from (R)-pantoate and beta-alanine: step 1/1. Its function is as follows. Catalyzes the condensation of pantoate with beta-alanine in an ATP-dependent reaction via a pantoyl-adenylate intermediate. This is Pantothenate synthetase from Rhodospirillum rubrum (strain ATCC 11170 / ATH 1.1.1 / DSM 467 / LMG 4362 / NCIMB 8255 / S1).